The primary structure comprises 142 residues: Large ribosomal subunit protein uL13 (142 aa).

It belongs to the universal ribosomal protein uL13 family. In terms of assembly, part of the 50S ribosomal subunit.

Functionally, this protein is one of the early assembly proteins of the 50S ribosomal subunit, although it is not seen to bind rRNA by itself. It is important during the early stages of 50S assembly. The protein is Large ribosomal subunit protein uL13 of Halorhodospira halophila (strain DSM 244 / SL1) (Ectothiorhodospira halophila (strain DSM 244 / SL1)).